Consider the following 410-residue polypeptide: Divergent protein kinase domain 1C (410 aa).

The Cytoplasmic segment spans residues Met-1–Arg-19. The May mediate ER retention motif lies at Arg-18–Arg-19. Residues Gly-20–Leu-40 traverse the membrane as a helical segment. At Arg-41 to Lys-410 the chain is on the lumenal side.

This sequence belongs to the DIPK family. In terms of processing, among the many cysteines in the lumenal domain, most are probably involved in disulfide bonds. In terms of tissue distribution, mainly expressed in the brain and eye, some expression in kidney and skeletal muscle.

It is found in the endoplasmic reticulum membrane. The protein is Divergent protein kinase domain 1C (Dipk1c) of Mus musculus (Mouse).